Here is a 356-residue protein sequence, read N- to C-terminus: D-xylulose reductase (356 aa).

3 residues coordinate Zn(2+): Cys-44, His-69, and Glu-155. NAD(+) is bound at residue 179–184 (GAGPIG).

This sequence belongs to the zinc-containing alcohol dehydrogenase family. Zn(2+) serves as cofactor.

It catalyses the reaction xylitol + NAD(+) = D-xylulose + NADH + H(+). The protein operates within carbohydrate degradation; L-arabinose degradation via L-arabinitol; D-xylulose 5-phosphate from L-arabinose (fungal route): step 4/5. The polypeptide is D-xylulose reductase (XYL2) (Saccharomyces cerevisiae (strain ATCC 204508 / S288c) (Baker's yeast)).